A 249-amino-acid chain; its full sequence is MKAQVRTLTGEIAHEIDLPEIFREEYRPDLIKRAVLALQSTRFQPHGTNPYAGMRTSAESWGSGRGAAQVPRLKNGSRVARVPQATGGRAAHPPKVEKILVKEINRKEKRKALRSAVAASTYPDLVRERGHLFEGDLPLVFEDRFEEVTRTGDVIAALTALGVYADVERAKGSRKVRAGRGTMRGRRYKQRKSVLIVTGGEPLRAARNLAGVDAVAVDQLNAELLAPGTQAGRLTIWTESAIRRLEEFS.

Belongs to the universal ribosomal protein uL4 family. As to quaternary structure, part of the 50S ribosomal subunit.

In terms of biological role, one of the primary rRNA binding proteins, this protein initially binds near the 5'-end of the 23S rRNA. It is important during the early stages of 50S assembly. It makes multiple contacts with different domains of the 23S rRNA in the assembled 50S subunit and ribosome. Functionally, forms part of the polypeptide exit tunnel. This chain is Large ribosomal subunit protein uL4, found in Methanoculleus marisnigri (strain ATCC 35101 / DSM 1498 / JR1).